A 140-amino-acid polypeptide reads, in one-letter code: Myrosinase 2 (140 aa).

The active-site Nucleophile is the arginine 70. Asparagine 114 and asparagine 127 each carry an N-linked (GlcNAc...) asparagine glycan.

This sequence belongs to the glycosyl hydrolase 1 family. As to quaternary structure, homodimer.

The enzyme catalyses a thioglucoside + H2O = a sugar + a thiol.. Inhibited by ascorbate. Functionally, degradation of glucosinolates (glucose residue linked by a thioglucoside bound to an amino acid derivative) to glucose, sulfate and any of the products: thiocyanates, isothiocyanates, nitriles, epithionitriles or oxazolidine-2-thiones. The sequence is that of Myrosinase 2 from Brevicoryne brassicae (Mealy cabbage aphid).